We begin with the raw amino-acid sequence, 481 residues long: 3-isopropylmalate dehydratase large subunit (481 aa).

[4Fe-4S] cluster contacts are provided by cysteine 357, cysteine 417, and cysteine 420.

It belongs to the aconitase/IPM isomerase family. LeuC type 1 subfamily. Heterodimer of LeuC and LeuD. [4Fe-4S] cluster serves as cofactor.

It carries out the reaction (2R,3S)-3-isopropylmalate = (2S)-2-isopropylmalate. It functions in the pathway amino-acid biosynthesis; L-leucine biosynthesis; L-leucine from 3-methyl-2-oxobutanoate: step 2/4. Its function is as follows. Catalyzes the isomerization between 2-isopropylmalate and 3-isopropylmalate, via the formation of 2-isopropylmaleate. In Mycolicibacterium vanbaalenii (strain DSM 7251 / JCM 13017 / BCRC 16820 / KCTC 9966 / NRRL B-24157 / PYR-1) (Mycobacterium vanbaalenii), this protein is 3-isopropylmalate dehydratase large subunit.